A 599-amino-acid chain; its full sequence is Elongation factor 4 (599 aa).

In terms of domain architecture, tr-type G spans 2–184 (KNIRNFSIIA…RLVRDIPPPE (183 aa)). GTP contacts are provided by residues 14 to 19 (DHGKST) and 131 to 134 (NKID).

It belongs to the TRAFAC class translation factor GTPase superfamily. Classic translation factor GTPase family. LepA subfamily.

The protein localises to the cell inner membrane. The enzyme catalyses GTP + H2O = GDP + phosphate + H(+). Required for accurate and efficient protein synthesis under certain stress conditions. May act as a fidelity factor of the translation reaction, by catalyzing a one-codon backward translocation of tRNAs on improperly translocated ribosomes. Back-translocation proceeds from a post-translocation (POST) complex to a pre-translocation (PRE) complex, thus giving elongation factor G a second chance to translocate the tRNAs correctly. Binds to ribosomes in a GTP-dependent manner. This chain is Elongation factor 4, found in Shigella dysenteriae serotype 1 (strain Sd197).